The chain runs to 207 residues: Small ribosomal subunit protein uS4 (207 aa).

The segment at lysine 31 to asparagine 54 is disordered. A compositionally biased stretch (polar residues) spans glycine 42–glycine 53. The region spanning serine 97–glutamate 158 is the S4 RNA-binding domain.

The protein belongs to the universal ribosomal protein uS4 family. Part of the 30S ribosomal subunit. Contacts protein S5. The interaction surface between S4 and S5 is involved in control of translational fidelity.

Functionally, one of the primary rRNA binding proteins, it binds directly to 16S rRNA where it nucleates assembly of the body of the 30S subunit. With S5 and S12 plays an important role in translational accuracy. The polypeptide is Small ribosomal subunit protein uS4 (Polynucleobacter asymbioticus (strain DSM 18221 / CIP 109841 / QLW-P1DMWA-1) (Polynucleobacter necessarius subsp. asymbioticus)).